Reading from the N-terminus, the 338-residue chain is D-erythrose-4-phosphate dehydrogenase (338 aa).

An NAD(+)-binding site is contributed by 11-12 (RI). Residues 153–155 (SCT), arginine 199, 212–213 (TK), and arginine 235 each bind substrate. Cysteine 154 acts as the Nucleophile in catalysis. Asparagine 317 provides a ligand contact to NAD(+).

Belongs to the glyceraldehyde-3-phosphate dehydrogenase family. Epd subfamily. In terms of assembly, homotetramer.

Its subcellular location is the cytoplasm. The catalysed reaction is D-erythrose 4-phosphate + NAD(+) + H2O = 4-phospho-D-erythronate + NADH + 2 H(+). The protein operates within cofactor biosynthesis; pyridoxine 5'-phosphate biosynthesis; pyridoxine 5'-phosphate from D-erythrose 4-phosphate: step 1/5. Its function is as follows. Catalyzes the NAD-dependent conversion of D-erythrose 4-phosphate to 4-phosphoerythronate. The chain is D-erythrose-4-phosphate dehydrogenase from Shewanella putrefaciens (strain CN-32 / ATCC BAA-453).